Consider the following 288-residue polypeptide: Bis(5'-nucleosyl)-tetraphosphatase, symmetrical (288 aa).

This sequence belongs to the Ap4A hydrolase family.

The enzyme catalyses P(1),P(4)-bis(5'-adenosyl) tetraphosphate + H2O = 2 ADP + 2 H(+). In terms of biological role, hydrolyzes diadenosine 5',5'''-P1,P4-tetraphosphate to yield ADP. This is Bis(5'-nucleosyl)-tetraphosphatase, symmetrical from Baumannia cicadellinicola subsp. Homalodisca coagulata.